The primary structure comprises 519 residues: General transcription factor 3C polypeptide 5 (519 aa).

At Ala2 the chain carries N-acetylalanine. The segment at 465–519 is disordered; sequence ALFSSSAKADGGKEQLTYESGEDEEDEEEEEEEEEDFKPSDGSENEMETEILDYV. 2 stretches are compositionally biased toward acidic residues: residues 484-500 and 507-519; these read SGEDEEDEEEEEEEEED and SENEMETEILDYV.

Belongs to the TFIIIC subunit 5 family. As to quaternary structure, part of the TFIIIC subcomplex TFIIIC2, consisting of six subunits, GTF3C1, GTF3C2, GTF3C3, GTF3C4, GTF3C5 and GTF3C6. Interacts with BRF1, GTF3C6 and TBP.

Its subcellular location is the nucleus. Its function is as follows. Involved in RNA polymerase III-mediated transcription. Integral, tightly associated component of the DNA-binding TFIIIC2 subcomplex that directly binds tRNA and virus-associated RNA promoters. The protein is General transcription factor 3C polypeptide 5 (GTF3C5) of Homo sapiens (Human).